The following is a 981-amino-acid chain: uncharacterized protein (981 aa).

Disordered stretches follow at residues 65-133 (NIDN…SNNS), 149-463 (SSNS…NKIE), 491-580 (SNNI…DSPL), 592-834 (EQTN…LNQV), and 861-891 (VQND…NDGN). Residues 75 to 88 (SSDDDDDDDDDDDY) show a composition bias toward acidic residues. Low complexity-rich tracts occupy residues 89 to 133 (NNNN…SNNS), 149 to 158 (SSNSINNNDN), and 170 to 181 (SAKTTSSLTSSK). The span at 182 to 195 (RSLDSRNRNRDRSY) shows a compositional bias: basic and acidic residues. Positions 196–206 (TRSRSRSRSRS) are enriched in basic residues. Residues 207-227 (YSRGFSSLSRSRSRSRSISSR) show a composition bias toward low complexity. A compositionally biased stretch (basic residues) spans 228 to 269 (SRSRSRSRRSRSRSSRSRSRSRSKSKSKSRRSRSRSRSRRSR). A compositionally biased stretch (basic and acidic residues) spans 270–292 (SRSDSRSRSDSRGRSRSRSDSRK). The span at 314-358 (SSKRHQNSRKRNRSYSRSRTRSWSRSRTRSRSRRRYGGRTFRSPR) shows a compositional bias: basic residues. Positions 359 to 452 (RSRDDSRDRG…SQSPHNEKNK (94 aa)) are enriched in basic and acidic residues. A compositionally biased stretch (low complexity) spans 491-553 (SNNINNNNIK…SHNNTNGNVN (63 aa)). Polar residues-rich tracts occupy residues 554-576 (GVSK…STDL) and 605-622 (ESNN…SSTE). Basic and acidic residues predominate over residues 623–634 (NENKNRENEKNN). Low complexity-rich tracts occupy residues 635–820 (SENS…NNNS) and 867–891 (SSPI…NDGN).

This is an uncharacterized protein from Dictyostelium discoideum (Social amoeba).